The sequence spans 200 residues: Probable molybdenum cofactor guanylyltransferase (200 aa).

GTP contacts are provided by residues 9–11 (LAG), Lys-21, Asp-69, and Asp-100. Position 100 (Asp-100) interacts with Mg(2+).

The protein belongs to the MobA family. Mg(2+) serves as cofactor.

Its subcellular location is the cytoplasm. It carries out the reaction Mo-molybdopterin + GTP + H(+) = Mo-molybdopterin guanine dinucleotide + diphosphate. Its function is as follows. Transfers a GMP moiety from GTP to Mo-molybdopterin (Mo-MPT) cofactor (Moco or molybdenum cofactor) to form Mo-molybdopterin guanine dinucleotide (Mo-MGD) cofactor. This is Probable molybdenum cofactor guanylyltransferase from Bacillus cereus (strain ZK / E33L).